The following is a 1146-amino-acid chain: Error-prone DNA polymerase (1146 aa).

2 disordered regions span residues 1 to 43 (MGWG…WSRK) and 154 to 178 (ATPE…PPGP). Over residues 12–26 (ELERVLSGRPGRTDP) the composition is skewed to basic and acidic residues.

The protein belongs to the DNA polymerase type-C family. DnaE2 subfamily.

The protein resides in the cytoplasm. It catalyses the reaction DNA(n) + a 2'-deoxyribonucleoside 5'-triphosphate = DNA(n+1) + diphosphate. Its function is as follows. DNA polymerase involved in damage-induced mutagenesis and translesion synthesis (TLS). It is not the major replicative DNA polymerase. The sequence is that of Error-prone DNA polymerase from Nocardia farcinica (strain IFM 10152).